We begin with the raw amino-acid sequence, 60 residues long: MAQVKVTLIHSVAHRQPTQRRTVKALGLGKINSSVILPDNAATRGQIFKIAHLVSVEEVK.

The protein belongs to the universal ribosomal protein uL30 family. In terms of assembly, part of the 50S ribosomal subunit.

This is Large ribosomal subunit protein uL30 from Limosilactobacillus reuteri (strain DSM 20016) (Lactobacillus reuteri).